The sequence spans 184 residues: MVNSFIKTTEEKMKKSVEKIAEELKHLRTGRATPAVLEEIKIDYYGVPTPVLQVAQVTTEERQLVIKPWERNLLNVIEKAILASDLGLTPVNDGTVVRINFPTPTTEQRQKWVKKAKEIVEEGKVAVRNIRRDILKDIKDKKKAGEISEDDEKRLEKEIQNLTDKYVAELDKLFEKKEKEIMEF.

This sequence belongs to the RRF family.

Its subcellular location is the cytoplasm. In terms of biological role, responsible for the release of ribosomes from messenger RNA at the termination of protein biosynthesis. May increase the efficiency of translation by recycling ribosomes from one round of translation to another. In Fervidobacterium nodosum (strain ATCC 35602 / DSM 5306 / Rt17-B1), this protein is Ribosome-recycling factor.